The primary structure comprises 262 residues: L-aspartate dehydrogenase (262 aa).

Residues Ala-128 and Asn-183 each contribute to the NAD(+) site. The active site involves His-213.

Belongs to the L-aspartate dehydrogenase family.

It catalyses the reaction L-aspartate + NADP(+) + H2O = oxaloacetate + NH4(+) + NADPH + H(+). It carries out the reaction L-aspartate + NAD(+) + H2O = oxaloacetate + NH4(+) + NADH + H(+). It participates in cofactor biosynthesis; NAD(+) biosynthesis; iminoaspartate from L-aspartate (dehydrogenase route): step 1/1. Its function is as follows. Specifically catalyzes the NAD or NADP-dependent dehydrogenation of L-aspartate to iminoaspartate. The sequence is that of L-aspartate dehydrogenase from Methanopyrus kandleri (strain AV19 / DSM 6324 / JCM 9639 / NBRC 100938).